Here is a 31-residue protein sequence, read N- to C-terminus: Cytochrome b6-f complex subunit 6 (31 aa).

A helical membrane pass occupies residues isoleucine 4–glycine 24.

It belongs to the PetL family. In terms of assembly, the 4 large subunits of the cytochrome b6-f complex are cytochrome b6, subunit IV (17 kDa polypeptide, PetD), cytochrome f and the Rieske protein, while the 4 small subunits are PetG, PetL, PetM and PetN. The complex functions as a dimer.

The protein localises to the plastid. Its subcellular location is the chloroplast thylakoid membrane. Functionally, component of the cytochrome b6-f complex, which mediates electron transfer between photosystem II (PSII) and photosystem I (PSI), cyclic electron flow around PSI, and state transitions. PetL is important for photoautotrophic growth as well as for electron transfer efficiency and stability of the cytochrome b6-f complex. The sequence is that of Cytochrome b6-f complex subunit 6 from Oenothera elata subsp. hookeri (Hooker's evening primrose).